The following is a 392-amino-acid chain: Caveolae-associated protein 1 (392 aa).

At Met-1 the chain carries N-acetylmethionine. Over residues 1–10 (MEDVTLHIVE) the composition is skewed to basic and acidic residues. The segment at 1–45 (MEDVTLHIVERPYSGFPDASSEGPEPTQGEARATEEPSGTGSDEL) is disordered. Residues 1–100 (MEDVTLHIVE…IQGELSKLGK (100 aa)) form a required for homotrimerization and for interaction with CAVIN2 and CAVIN3 region. Residues Ser-21 and Ser-38 each carry the phosphoserine modification. At Thr-40 the chain carries Phosphothreonine. Phosphoserine is present on residues Ser-42 and Ser-48. The interval 54 to 64 (VLVLSLLDKII) is nuclear export signal. The tract at residues 55–77 (LVLSLLDKIIGAVDQIQLTQAQL) is leucine-zipper 1. A Glycyl lysine isopeptide (Lys-Gly) (interchain with G-Cter in SUMO2) cross-link involves residue Lys-118. Ser-120 bears the Phosphoserine mark. Residue Lys-124 forms a Glycyl lysine isopeptide (Lys-Gly) (interchain with G-Cter in SUMO2) linkage. The segment at 138-154 (KKLEVNEAELLRRRNFK) is nuclear localization signal. Tyr-158 bears the Phosphotyrosine mark. Lys-163 participates in a covalent cross-link: Glycyl lysine isopeptide (Lys-Gly) (interchain with G-Cter in SUMO1); alternate. Lys-163 participates in a covalent cross-link: Glycyl lysine isopeptide (Lys-Gly) (interchain with G-Cter in SUMO2); alternate. A Glycyl lysine isopeptide (Lys-Gly) (interchain with G-Cter in SUMO2) cross-link involves residue Lys-167. The leucine-zipper 2 stretch occupies residues 168–188 (LSVSKSLKESEALPEKEGDEL). A phosphoserine mark is found at Ser-169 and Ser-171. A Glycyl lysine isopeptide (Lys-Gly) (interchain with G-Cter in SUMO2) cross-link involves residue Lys-172. A phosphoserine mark is found at Ser-173 and Ser-177. Positions 173-183 (SLKESEALPEK) are enriched in basic and acidic residues. Residues 173–197 (SLKESEALPEKEGDELGEGERPEDD) form a disordered region. A compositionally biased stretch (acidic residues) spans 184-197 (EGDELGEGERPEDD). Thr-198 is subject to Phosphothreonine. The stretch at 201–284 (IELSSDEAVE…RMNKLGTRLV (84 aa)) forms a coiled coil. Phosphoserine occurs at positions 204 and 205. Residues 235-251 (KKAFSKEKMEKTKVRTR) are nuclear localization signal. The leucine-zipper 3 stretch occupies residues 259 to 299 (LKTKENLEKTRHTLEKRMNKLGTRLVPVERREKLKTSRDKL). Phosphoserine is present on Ser-302. Thr-304 is modified (phosphothreonine). Residue Tyr-310 is modified to Phosphotyrosine. A Glycyl lysine isopeptide (Lys-Gly) (interchain with G-Cter in SUMO2) cross-link involves residue Lys-328. The segment at 347-367 (GPEDDEVGAERGEATDLLRGS) is disordered. Phosphoserine is present on residues Ser-367, Ser-368, Ser-381, Ser-389, and Ser-391.

Belongs to the CAVIN family. Component of the CAVIN complex composed of CAVIN1, CAVIN2, CAVIN3 and CAVIN4. Homotrimer. Interacts with LIPE in the adipocyte cytoplasm. Interacts with RNA polymerase I subunit POLR1A/RPA1. Interacts with TTF1. Binds the 3' end of pre-rRNA. Interacts with transcription factor ZNF148. Interacts with CAV1, CAVIN2 and CAVIN3. Interacts with CAVIN4. In terms of processing, phosphorylated. Present in active and inactive forms. Changes in phosphorylation pattern may alter activity. Phosphorylation at Tyr-158 is essential for its function in the regulation of the ribosomal transcriptional activity. Post-translationally, monoubiquitinated. As to expression, expressed in the heart, stomach, adipose tissue and lung (at protein level). Expressed in testis, kidney, muscle, liver, spleen and brain.

The protein localises to the membrane. It is found in the caveola. Its subcellular location is the cell membrane. It localises to the microsome. The protein resides in the endoplasmic reticulum. The protein localises to the cytoplasm. It is found in the cytosol. Its subcellular location is the mitochondrion. It localises to the nucleus. Functionally, plays an important role in caveolae formation and organization. Essential for the formation of caveolae in all tissues. Core component of the CAVIN complex which is essential for recruitment of the complex to the caveolae in presence of calveolin-1 (CAV1). Essential for normal oligomerization of CAV1. Promotes ribosomal transcriptional activity in response to metabolic challenges in the adipocytes and plays an important role in the formation of the ribosomal transcriptional loop. Dissociates transcription complexes paused by DNA-bound TTF1, thereby releasing both RNA polymerase I and pre-RNA from the template. The caveolae biogenesis pathway is required for the secretion of proteins such as GASK1A. This is Caveolae-associated protein 1 (Cavin1) from Mus musculus (Mouse).